A 332-amino-acid chain; its full sequence is Heterogeneous nuclear ribonucleoprotein A/B (332 aa).

The disordered stretch occupies residues 1–66; it reads MSEAGEEQPM…DQINASKNEE (66 aa). Positions 29-49 are enriched in low complexity; sequence GRGWTGAAAGAGGATAAPPSG. RRM domains follow at residues 69 to 154 and 153 to 233; these read GKMF…PVKK and KKIF…QPKE. Phosphoserine is present on serine 81. Glycyl lysine isopeptide (Lys-Gly) (interchain with G-Cter in SUMO2) cross-links involve residues lysine 130 and lysine 203. N6-acetyllysine is present on lysine 215. A disordered region spans residues 235–268; it reads YQQQQYGSGGRGNRNRGNRGSGGGGGGGGQSQSW. Phosphoserine is present on serine 242. Residue arginine 245 is modified to Dimethylated arginine; alternate. Omega-N-methylarginine; alternate is present on arginine 245. Omega-N-methylarginine occurs at positions 250, 251, 253, and 254. Residues 253 to 264 are compositionally biased toward gly residues; it reads RGSGGGGGGGGQ. Serine 255 and glycine 256 each carry phosphoserine. N6-acetyllysine is present on residues glycine 271, tyrosine 272, and lysine 318. The segment at 311-332 is disordered; it reads QGSTNYGKSQRRGGHQNNYKPY. Residue arginine 322 is modified to Dimethylated arginine; alternate. Arginine 322 carries the omega-N-methylarginine; alternate modification. Arginine 322 carries the post-translational modification Asymmetric dimethylarginine; alternate.

Identified in a IGF2BP1-dependent mRNP granule complex containing untranslated mRNAs. Interacts with APOBEC1. Post-translationally, dimethylation at Arg-322 is probably asymmetric. In terms of tissue distribution, ubiquitous.

The protein localises to the nucleus. It is found in the cytoplasm. Functionally, binds single-stranded RNA. Has a high affinity for G-rich and U-rich regions of hnRNA. Also binds to APOB mRNA transcripts around the RNA editing site. The protein is Heterogeneous nuclear ribonucleoprotein A/B (HNRNPAB) of Homo sapiens (Human).